The following is a 434-amino-acid chain: Enolase (434 aa).

2 residues coordinate substrate: His158 and Glu167. The active-site Proton donor is Glu210. Positions 245, 294, and 319 each coordinate Mg(2+). Residues Glu294 and Asp319 each contribute to the substrate site. Lys344 (proton acceptor) is an active-site residue. Substrate contacts are provided by residues 371 to 374 and Lys395; that span reads SHRS.

Belongs to the enolase family. In terms of assembly, homodimer. It depends on Mg(2+) as a cofactor.

The protein resides in the cytoplasm. The enzyme catalyses (2R)-2-phosphoglycerate = phosphoenolpyruvate + H2O. The protein operates within carbohydrate degradation; glycolysis; pyruvate from D-glyceraldehyde 3-phosphate: step 4/5. The chain is Enolase from Caenorhabditis elegans.